A 178-amino-acid polypeptide reads, in one-letter code: CDP-diacylglycerol--glycerol-3-phosphate 3-phosphatidyltransferase (178 aa).

Helical transmembrane passes span 28 to 48, 88 to 108, 125 to 145, and 147 to 167; these read LSSLVLVLFLALMDFLDGFFA, LIFFLLLGRDITLIIGGIFLI, LFVSLSLLSVGILNVYDVNFL, and ILTNVLEIVSLILILVSWVDY.

The protein belongs to the CDP-alcohol phosphatidyltransferase class-I family.

It localises to the cell membrane. It catalyses the reaction a CDP-1,2-diacyl-sn-glycerol + sn-glycerol 3-phosphate = a 1,2-diacyl-sn-glycero-3-phospho-(1'-sn-glycero-3'-phosphate) + CMP + H(+). It participates in phospholipid metabolism; phosphatidylglycerol biosynthesis; phosphatidylglycerol from CDP-diacylglycerol: step 1/2. Functionally, this protein catalyzes the committed step to the synthesis of the acidic phospholipids. The protein is CDP-diacylglycerol--glycerol-3-phosphate 3-phosphatidyltransferase (pgsA) of Aquifex aeolicus (strain VF5).